Reading from the N-terminus, the 414-residue chain is Esterase FrsA (414 aa).

This sequence belongs to the FrsA family.

It catalyses the reaction a carboxylic ester + H2O = an alcohol + a carboxylate + H(+). Catalyzes the hydrolysis of esters. The protein is Esterase FrsA of Klebsiella pneumoniae subsp. pneumoniae (strain ATCC 700721 / MGH 78578).